The primary structure comprises 105 residues: U2-lycotoxin-Ls1b (105 aa).

The first 17 residues, 1-17 (MIKYVLISALLVVAVYS), serve as a signal peptide directing secretion. The propeptide occupies 18-41 (FTIEDNEDALLEEAEDELDTEEER). Intrachain disulfides connect Cys51–Cys67, Cys58–Cys97, Cys60–Cys83, and Cys69–Cys81.

It belongs to the neurotoxin 04 (omega-agtx) family. 01 (type I omega-agtx) subfamily. As to expression, expressed by the venom gland.

It is found in the secreted. Insecticidal to house crickets. It induces an excitatory slow-onset impact that leads to irreversible spastic paralysis. It also modifies human voltage-gated potassium channel Kv1.5/KCNA5. Most likely, it binds to the voltage-sensing domain of the channel, suggesting it does not block the pore but prevents its opening at physiological membrane potentials. The recombinant peptide binds to the channel in an irreversible manner and slows down the hKv1.5 current activation kinetics. It is not toxic to mice, when intracranially injected (at 0.5 ug/g mouse). The sequence is that of U2-lycotoxin-Ls1b from Lycosa singoriensis (Wolf spider).